The sequence spans 324 residues: Delta-aminolevulinic acid dehydratase (324 aa).

Zn(2+) contacts are provided by Cys120, Cys122, and Cys130. The active-site Schiff-base intermediate with substrate is the Lys195. 5-aminolevulinate-binding residues include Arg205 and Arg217. Glu233 is a binding site for Mg(2+). Lys248 acts as the Schiff-base intermediate with substrate in catalysis. Positions 274 and 313 each coordinate 5-aminolevulinate.

The protein belongs to the ALAD family. Homooctamer. Requires Zn(2+) as cofactor.

It catalyses the reaction 2 5-aminolevulinate = porphobilinogen + 2 H2O + H(+). It functions in the pathway porphyrin-containing compound metabolism; protoporphyrin-IX biosynthesis; coproporphyrinogen-III from 5-aminolevulinate: step 1/4. Its function is as follows. Catalyzes an early step in the biosynthesis of tetrapyrroles. Binds two molecules of 5-aminolevulinate per subunit, each at a distinct site, and catalyzes their condensation to form porphobilinogen. In Bacillus subtilis (strain 168), this protein is Delta-aminolevulinic acid dehydratase (hemB).